The sequence spans 206 residues: MILCDIGNSTAKFYNNGISKVMSIKEFQKFEPKDTVYFINVNPNFKRKLKGTLFFDLAPYFEINTLYSKELGVDRIAASCAINDGIVIDAGSAITVDMVNKNIHMGGFILPGITKYVEAYKSISSVLDVGLNSQVNLDKIPLNTRDAITYGVVNSVVLLVENIAKNRKIYITGGDGQFLSQFFKNAVYDKNLVFRSMLNVIKSKGL.

5-12 (DIGNSTAK) is an ATP binding site. Substrate-binding positions include Tyr-67 and 72-75 (GVDR). Asp-74 functions as the Proton acceptor in the catalytic mechanism. Asp-89 provides a ligand contact to K(+). Ser-92 contributes to the ATP binding site. Substrate is bound at residue Thr-144.

This sequence belongs to the type III pantothenate kinase family. In terms of assembly, homodimer. It depends on NH4(+) as a cofactor. K(+) serves as cofactor.

The protein localises to the cytoplasm. It carries out the reaction (R)-pantothenate + ATP = (R)-4'-phosphopantothenate + ADP + H(+). Its pathway is cofactor biosynthesis; coenzyme A biosynthesis; CoA from (R)-pantothenate: step 1/5. In terms of biological role, catalyzes the phosphorylation of pantothenate (Pan), the first step in CoA biosynthesis. The sequence is that of Type III pantothenate kinase from Campylobacter hominis (strain ATCC BAA-381 / DSM 21671 / CCUG 45161 / LMG 19568 / NCTC 13146 / CH001A).